Reading from the N-terminus, the 638-residue chain is 3D-(3,5/4)-trihydroxycyclohexane-1,2-dione hydrolase (638 aa).

Residue E67 participates in thiamine diphosphate binding. Positions 442–523 (SLPGDLQRLW…INIMLFDNSG (82 aa)) are thiamine pyrophosphate binding. 2 residues coordinate Mg(2+): D494 and N521.

Belongs to the TPP enzyme family. Mg(2+) is required as a cofactor. Thiamine diphosphate serves as cofactor.

The enzyme catalyses 3D-3,5/4-trihydroxycyclohexane-1,2-dione + H2O = 5-deoxy-D-glucuronate + H(+). It functions in the pathway polyol metabolism; myo-inositol degradation into acetyl-CoA; acetyl-CoA from myo-inositol: step 3/7. In terms of biological role, involved in the cleavage of the C1-C2 bond of 3D-(3,5/4)-trihydroxycyclohexane-1,2-dione (THcHDO) to yield 5-deoxy-glucuronate (5DG). In Listeria monocytogenes serotype 4b (strain F2365), this protein is 3D-(3,5/4)-trihydroxycyclohexane-1,2-dione hydrolase.